The sequence spans 110 residues: V-type proton ATPase subunit G1 (110 aa).

Position 1 is an N-acetylmethionine (Met1). The segment at 60 to 80 is disordered; sequence KLEETSGDSGANVKRLEQETD.

Belongs to the V-ATPase G subunit family. V-ATPase is a heteromultimeric enzyme composed of a peripheral catalytic V1 complex (components A to H) attached to an integral membrane V0 proton pore complex (components: a, c, c'', d and e).

Its subcellular location is the cell membrane. The protein localises to the vacuole membrane. Functionally, catalytic subunit of the peripheral V1 complex of vacuolar ATPase (V-ATPase). V-ATPase is responsible for acidifying a variety of intracellular compartments in eukaryotic cells. This chain is V-type proton ATPase subunit G1 (VHA-G1), found in Arabidopsis thaliana (Mouse-ear cress).